We begin with the raw amino-acid sequence, 763 residues long: MSELLSFALFLASVLIYAWKAGRNTWWFAATLTVLGLFVVLNITLYASDYFTGDGINDAVLYTLTNSLTGAGIGKYILPGVGIVLALTAVFVSLGWILRRRRHHPHHFGYSLLALLLALGSVDASPAFRQITELVKSQTRDGDPDFAIYYKEPAKTIPNPKLNLVYIYGESLERTYFDNEAFPDLTPELGAIKNESMDFSHTMQLPGTDYTIAGMVASQCGIPLFAPFEGNASASVSSFFPQNICLGDILKNSGYQNYFVQGANLRFAGKDVFLKSHGFDHLYGAEELKGVVADPTYRNDWGFYDDTVLDEAWKKFEELSRSGQRFSLFTLTVDTHHPDGFISRTCNRKRYDFDGKQNQSFSAVSCSQENIATFINKIKASPWFKNTVIVVSSDHLAMNNTAWKYLNKQDRNNLFFVLRGDKPQQETLAVKRNTMDNGATVLDILGGDNFLGLGRSSLSGQSMSEIFLNIKEKTLAWKPDIIRLWKFPKEIKAFTIDQDKNTIAFSGSHFRLPLLLRVSDKRVEPLPESEYSAPLRFQLADFAPRDNFVWVDRCYKMARLWAPELSLSTDWCVSQGQLGGEQRVQHVDKPQWQGKTAFKDTVIDMERYKGNVDTLKIVDNDIRYKADSFIFNVAGAPEEVKQFSGISRPESWGRWSNAQLGDEVKIEYNAPLPKKFDLVITAKAYGTNASKPIPVRIGNEEQTMVLGNEVTTTTLHFDNPNSASTVVIVPPEPIATNEGNILGHSPRKLGIGMVEIKVVEREG.

4 helical membrane-spanning segments follow: residues 1 to 21 (MSELLSFALFLASVLIYAWKA), 26 to 46 (WWFAATLTVLGLFVVLNITLY), 77 to 97 (ILPGVGIVLALTAVFVSLGWI), and 108 to 128 (FGYSLLALLLALGSVDASPAF).

This sequence belongs to the OpgB family.

It is found in the cell inner membrane. It carries out the reaction a phosphatidylglycerol + a membrane-derived-oligosaccharide D-glucose = a 1,2-diacyl-sn-glycerol + a membrane-derived-oligosaccharide 6-(glycerophospho)-D-glucose.. It functions in the pathway glycan metabolism; osmoregulated periplasmic glucan (OPG) biosynthesis. Functionally, transfers a phosphoglycerol residue from phosphatidylglycerol to the membrane-bound nascent glucan backbones. The chain is Phosphoglycerol transferase I from Escherichia fergusonii (strain ATCC 35469 / DSM 13698 / CCUG 18766 / IAM 14443 / JCM 21226 / LMG 7866 / NBRC 102419 / NCTC 12128 / CDC 0568-73).